The primary structure comprises 529 residues: Peptide chain release factor 3 (529 aa).

Residues 11–280 (SKRRTFAIIS…GLTEWAPAPK (270 aa)) form the tr-type G domain. GTP is bound by residues 20–27 (SHPDAGKT), 88–92 (DTPGH), and 142–145 (NKLD).

Belongs to the TRAFAC class translation factor GTPase superfamily. Classic translation factor GTPase family. PrfC subfamily.

Its subcellular location is the cytoplasm. Increases the formation of ribosomal termination complexes and stimulates activities of RF-1 and RF-2. It binds guanine nucleotides and has strong preference for UGA stop codons. It may interact directly with the ribosome. The stimulation of RF-1 and RF-2 is significantly reduced by GTP and GDP, but not by GMP. The protein is Peptide chain release factor 3 of Vibrio parahaemolyticus serotype O3:K6 (strain RIMD 2210633).